The following is a 73-amino-acid chain: Large ribosomal subunit protein bL27c (73 aa).

This sequence belongs to the bacterial ribosomal protein bL27 family.

The protein localises to the plastid. It is found in the chloroplast. The polypeptide is Large ribosomal subunit protein bL27c (rpl27) (Haptolina hirta (Plankton alga)).